The primary structure comprises 572 residues: Flagellin B (572 aa).

The protein belongs to the bacterial flagellin family. As to quaternary structure, heteromer of flaA and flaB.

The protein resides in the secreted. The protein localises to the bacterial flagellum. Its function is as follows. Flagellin is the subunit protein which polymerizes to form the filaments of bacterial flagella. This chain is Flagellin B (flaB), found in Campylobacter jejuni subsp. jejuni serotype O:2 (strain ATCC 700819 / NCTC 11168).